Consider the following 318-residue polypeptide: Aspartate carbamoyltransferase catalytic subunit (318 aa).

Carbamoyl phosphate is bound by residues Arg-58 and Thr-59. Position 86 (Lys-86) interacts with L-aspartate. Carbamoyl phosphate-binding residues include Arg-108, His-141, and Gln-144. The L-aspartate site is built by Arg-174 and Arg-226. Positions 270 and 271 each coordinate carbamoyl phosphate.

This sequence belongs to the aspartate/ornithine carbamoyltransferase superfamily. ATCase family. Heterododecamer (2C3:3R2) of six catalytic PyrB chains organized as two trimers (C3), and six regulatory PyrI chains organized as three dimers (R2).

The catalysed reaction is carbamoyl phosphate + L-aspartate = N-carbamoyl-L-aspartate + phosphate + H(+). The protein operates within pyrimidine metabolism; UMP biosynthesis via de novo pathway; (S)-dihydroorotate from bicarbonate: step 2/3. Catalyzes the condensation of carbamoyl phosphate and aspartate to form carbamoyl aspartate and inorganic phosphate, the committed step in the de novo pyrimidine nucleotide biosynthesis pathway. This is Aspartate carbamoyltransferase catalytic subunit from Lactobacillus delbrueckii subsp. bulgaricus (strain ATCC 11842 / DSM 20081 / BCRC 10696 / JCM 1002 / NBRC 13953 / NCIMB 11778 / NCTC 12712 / WDCM 00102 / Lb 14).